Reading from the N-terminus, the 388-residue chain is Succinate--CoA ligase [ADP-forming] subunit beta (388 aa).

The region spanning 9 to 244 (KEIFRSMGVA…LEEEDPKEIE (236 aa)) is the ATP-grasp domain. ATP is bound by residues lysine 46, 53-55 (GRG), glutamate 99, cysteine 102, and glutamate 107. Mg(2+) is bound by residues asparagine 199 and aspartate 213. Residues asparagine 264 and 321 to 323 (GIM) contribute to the substrate site.

This sequence belongs to the succinate/malate CoA ligase beta subunit family. In terms of assembly, heterotetramer of two alpha and two beta subunits. The cofactor is Mg(2+).

The catalysed reaction is succinate + ATP + CoA = succinyl-CoA + ADP + phosphate. The enzyme catalyses GTP + succinate + CoA = succinyl-CoA + GDP + phosphate. It functions in the pathway carbohydrate metabolism; tricarboxylic acid cycle; succinate from succinyl-CoA (ligase route): step 1/1. Succinyl-CoA synthetase functions in the citric acid cycle (TCA), coupling the hydrolysis of succinyl-CoA to the synthesis of either ATP or GTP and thus represents the only step of substrate-level phosphorylation in the TCA. The beta subunit provides nucleotide specificity of the enzyme and binds the substrate succinate, while the binding sites for coenzyme A and phosphate are found in the alpha subunit. The polypeptide is Succinate--CoA ligase [ADP-forming] subunit beta (Staphylococcus haemolyticus (strain JCSC1435)).